A 151-amino-acid polypeptide reads, in one-letter code: Deoxyuridine 5'-triphosphate nucleotidohydrolase (151 aa).

Substrate contacts are provided by residues 69-71, Asn-82, and 86-88; these read RSG and TID.

The protein belongs to the dUTPase family. The cofactor is Mg(2+).

It catalyses the reaction dUTP + H2O = dUMP + diphosphate + H(+). The protein operates within pyrimidine metabolism; dUMP biosynthesis; dUMP from dCTP (dUTP route): step 2/2. In terms of biological role, this enzyme is involved in nucleotide metabolism: it produces dUMP, the immediate precursor of thymidine nucleotides and it decreases the intracellular concentration of dUTP so that uracil cannot be incorporated into DNA. This chain is Deoxyuridine 5'-triphosphate nucleotidohydrolase, found in Rhodospirillum centenum (strain ATCC 51521 / SW).